A 399-amino-acid polypeptide reads, in one-letter code: Coiled-coil domain-containing protein 85C-B (399 aa).

Coiled-coil stretches lie at residues 52-84 and 113-144; these read NRSLQVHLHEIRNLKEINQKLQDDNQELRELCC and KEVSTYQQKLKELEINQENVLRENAELKDIIL. The disordered stretch occupies residues 151 to 199; that stretch reads NGAGSRSSIDSQSSLSNLNGGSGTVRDVGDGSSTSSGGSAGSPDHHHNH. The span at 155–169 shows a compositional bias: low complexity; the sequence is SRSSIDSQSSLSNLN.

Belongs to the CCDC85 family.

It is found in the cell junction. It localises to the tight junction. Its subcellular location is the adherens junction. Its function is as follows. May play a role in cell-cell adhesion and epithelium development through its interaction with proteins of the beta-catenin family. May play an important role in cortical development, especially in the maintenance of radial glia. The sequence is that of Coiled-coil domain-containing protein 85C-B (ccdc85cb) from Danio rerio (Zebrafish).